The chain runs to 198 residues: Ribonuclease HII (198 aa).

Residues His14 to Val198 form the RNase H type-2 domain. The a divalent metal cation site is built by Asp20, Glu21, and Asp110.

It belongs to the RNase HII family. Mn(2+) is required as a cofactor. The cofactor is Mg(2+).

The protein resides in the cytoplasm. The catalysed reaction is Endonucleolytic cleavage to 5'-phosphomonoester.. Its function is as follows. Endonuclease that specifically degrades the RNA of RNA-DNA hybrids. The protein is Ribonuclease HII of Sphingopyxis alaskensis (strain DSM 13593 / LMG 18877 / RB2256) (Sphingomonas alaskensis).